Reading from the N-terminus, the 200-residue chain is Protein OPI10 homolog (200 aa).

The protein belongs to the OPI10 family.

It is found in the cytoplasm. The protein resides in the nucleus envelope. The sequence is that of Protein OPI10 homolog from Schizosaccharomyces pombe (strain 972 / ATCC 24843) (Fission yeast).